A 492-amino-acid polypeptide reads, in one-letter code: GMP reductase (492 aa).

NADP(+) contacts are provided by residues 30-31 (SR) and R78. CBS domains are found at residues 99 to 162 (LIED…LVET) and 164 to 223 (MTPV…LNAT). Residues 260 to 262 (DIA) and 313 to 314 (VG) contribute to the NADP(+) site. 3 residues coordinate K(+): G314, G316, and C319. C319 acts as the Thioimidate intermediate in catalysis. T321 (proton donor/acceptor) is an active-site residue. A K(+)-binding site is contributed by R322. Residues 352-354 (DGG), 375-376 (GN), and 401-403 (GMA) contribute to the GMP site. Residues M402 and 454-457 (SGIS) contribute to the NADP(+) site. The short motif at 490–492 (SKL) is the Microbody targeting signal element.

This sequence belongs to the IMPDH/GMPR family. GuaC type 1 subfamily. In terms of assembly, homotetramer.

The protein resides in the glycosome. It catalyses the reaction IMP + NH4(+) + NADP(+) = GMP + NADPH + 2 H(+). With respect to regulation, activated by GTP and inhibited by ATP and IMP. Mycophenolic acid (MPA) is a competitive inhibitor of the enzyme with respect to NADPH. Catalyzes the irreversible NADPH-dependent deamination of GMP to IMP. It functions in the conversion of nucleobase, nucleoside and nucleotide derivatives of G to A nucleotides, and in maintaining the intracellular balance of A and G nucleotides. The sequence is that of GMP reductase from Leishmania major.